Consider the following 164-residue polypeptide: Transcription factor E (164 aa).

In terms of domain architecture, HTH TFE/IIEalpha-type spans Asn5–Glu87.

The protein belongs to the TFE family. As to quaternary structure, monomer. Interaction with RNA polymerase subunits RpoF and RpoE is necessary for Tfe stimulatory transcription activity. Able to interact with Tbp and RNA polymerase in the absence of DNA promoter. Interacts both with the preinitiation and elongation complexes.

Transcription factor that plays a role in the activation of archaeal genes transcribed by RNA polymerase. Facilitates transcription initiation by enhancing TATA-box recognition by TATA-box-binding protein (Tbp), and transcription factor B (Tfb) and RNA polymerase recruitment. Not absolutely required for transcription in vitro, but particularly important in cases where Tbp or Tfb function is not optimal. It dynamically alters the nucleic acid-binding properties of RNA polymerases by stabilizing the initiation complex and destabilizing elongation complexes. Seems to translocate with the RNA polymerase following initiation and acts by binding to the non template strand of the transcription bubble in elongation complexes. This Methanosarcina barkeri (strain Fusaro / DSM 804) protein is Transcription factor E.